A 388-amino-acid chain; its full sequence is MAAAVEKILGEQYYKDAMEQCHNYNARLCAERSVRLPFLDSQTRVAQSNCYIWMEKRHRGPGSAPGQLYTYPSRRWRKKRRAHPPEDPRLSFPSLKPDPEQMLKKEGVIPPDGSSLEALLRSDPIEKRIMPDSRDDDSLTEFPPLSRSARKRILEPDDFLDDLDDEDYEEDTPKKRGKGKAKGKGIGSARKKLDAAALDDRDKPYACDICGKRYKNRPGLSYHYAHSHLVDEEGAGAEDKEDSQPPTPIMHRPEEQKSKKGPDGIALPNNYCDFCLGDSKINKKTNQSEELVSCSDCGRSGHPSCLQFTAVMMAAVKTYRWQCIECKCCNICGTSENDDQLLFCDDCDRGYHMYCLVPPVAEPPEGSWSCHLCLDLLKDKASIYQNQS.

Residues 60–190 are disordered; that stretch reads GPGSAPGQLY…AKGKGIGSAR (131 aa). Basic and acidic residues-rich tracts occupy residues 97 to 107 and 123 to 137; these read PDPEQMLKKEG and DPIE…RDDD. The segment covering 156–170 has biased composition (acidic residues); that stretch reads PDDFLDDLDDEDYEE. The C2H2-type zinc-finger motif lies at 205-228; sequence YACDICGKRYKNRPGLSYHYAHSH. Positions 233–264 are disordered; that stretch reads EGAGAEDKEDSQPPTPIMHRPEEQKSKKGPDG. The segment covering 251 to 262 has biased composition (basic and acidic residues); sequence HRPEEQKSKKGP. 2 PHD-type zinc fingers span residues 269-329 and 326-376; these read NNYC…CKCC and CKCC…CLDL.

Belongs to the requiem/DPF family.

The protein localises to the cytoplasm. It localises to the nucleus. Its function is as follows. May be a transcription factor required for the apoptosis response following survival factor withdrawal from myeloid cells. Might also have a role in the development and maturation of lymphoid cells. The polypeptide is Zinc finger protein ubi-d4 A (req-a) (Xenopus laevis (African clawed frog)).